A 243-amino-acid polypeptide reads, in one-letter code: MPIDKKQEKNFTNKIQEEGQKSLDTSLTQEIEILEEKLNKNPDHKGTINTTPNDNSTSKNSKDKDFKFKKKTNSQNFKKNANKKPEKEFEEKIVNIARVTNVVKGGRRFSFAAVVVVGDKKGRVGYGHGKALEVPDAIKKAVKDAQNNLIRVPIINKSTVPHEQWAKFLASKVMLKPAPKGKGIIASNSVRAVVELAGYTDIYTKSYGSRSKENVVKAVFDALKKLRYAEDIAKMRDLDIKDL.

Basic and acidic residues-rich tracts occupy residues 1–21 (MPID…EGQK) and 34–46 (LEEK…DHKG). The tract at residues 1 to 85 (MPIDKKQEKN…NFKKNANKKP (85 aa)) is disordered. Residues 89 to 152 (FEEKIVNIAR…KDAQNNLIRV (64 aa)) enclose the S5 DRBM domain.

It belongs to the universal ribosomal protein uS5 family. In terms of assembly, part of the 30S ribosomal subunit. Contacts proteins S4 and S8.

Its function is as follows. With S4 and S12 plays an important role in translational accuracy. Located at the back of the 30S subunit body where it stabilizes the conformation of the head with respect to the body. The protein is Small ribosomal subunit protein uS5 of Mycoplasma mobile (strain ATCC 43663 / 163K / NCTC 11711) (Mesomycoplasma mobile).